A 218-amino-acid chain; its full sequence is Ribosome maturation factor RimM (218 aa).

In terms of domain architecture, PRC barrel spans 141 to 214; it reads GELWWDRDLV…HIVVDPPPGL (74 aa).

It belongs to the RimM family. Binds ribosomal protein uS19.

It is found in the cytoplasm. Its function is as follows. An accessory protein needed during the final step in the assembly of 30S ribosomal subunit, possibly for assembly of the head region. Essential for efficient processing of 16S rRNA. May be needed both before and after RbfA during the maturation of 16S rRNA. It has affinity for free ribosomal 30S subunits but not for 70S ribosomes. In Parafrankia sp. (strain EAN1pec), this protein is Ribosome maturation factor RimM.